The following is a 376-amino-acid chain: N-acetyldiaminopimelate deacetylase (376 aa).

D69 is a catalytic residue. E128 serves as the catalytic Proton acceptor.

Belongs to the peptidase M20A family. N-acetyldiaminopimelate deacetylase subfamily.

The enzyme catalyses N-acetyl-(2S,6S)-2,6-diaminopimelate + H2O = (2S,6S)-2,6-diaminopimelate + acetate. Its pathway is amino-acid biosynthesis; L-lysine biosynthesis via DAP pathway; LL-2,6-diaminopimelate from (S)-tetrahydrodipicolinate (acetylase route): step 3/3. Its function is as follows. Catalyzes the conversion of N-acetyl-diaminopimelate to diaminopimelate and acetate. This chain is N-acetyldiaminopimelate deacetylase, found in Bacillus mycoides (strain KBAB4) (Bacillus weihenstephanensis).